Here is a 72-residue protein sequence, read N- to C-terminus: Translation initiation factor IF-1 (72 aa).

The S1-like domain occupies 1–72 (MAREDLIEVE…SRGRITYRKK (72 aa)).

Belongs to the IF-1 family. As to quaternary structure, component of the 30S ribosomal translation pre-initiation complex which assembles on the 30S ribosome in the order IF-2 and IF-3, IF-1 and N-formylmethionyl-tRNA(fMet); mRNA recruitment can occur at any time during PIC assembly.

It is found in the cytoplasm. One of the essential components for the initiation of protein synthesis. Stabilizes the binding of IF-2 and IF-3 on the 30S subunit to which N-formylmethionyl-tRNA(fMet) subsequently binds. Helps modulate mRNA selection, yielding the 30S pre-initiation complex (PIC). Upon addition of the 50S ribosomal subunit IF-1, IF-2 and IF-3 are released leaving the mature 70S translation initiation complex. The chain is Translation initiation factor IF-1 from Acholeplasma laidlawii (strain PG-8A).